An 85-amino-acid polypeptide reads, in one-letter code: U4-theraphotoxin-Hhn1m (85 aa).

The signal sequence occupies residues 1-22 (MKVTLIAILTCAAVLVLHTTAA). Positions 23–48 (EELEAESQLVEVGMPDTELAAVDEER) are excised as a propeptide. Intrachain disulfides connect C52/C66, C56/C77, and C71/C82.

Belongs to the neurotoxin 12 (Hwtx-2) family. 02 (Hwtx-2) subfamily. As to expression, expressed by the venom gland.

The protein resides in the secreted. Functionally, postsynaptic neurotoxin. The protein is U4-theraphotoxin-Hhn1m of Cyriopagopus hainanus (Chinese bird spider).